A 584-amino-acid chain; its full sequence is ATP-dependent lipid A-core flippase (584 aa).

The next 5 helical transmembrane spans lie at 18–38, 65–85, 155–175, 252–272, and 277–297; these read LWPI…TLIL, VFVW…FSGF, IIGL…ILVL, IFDP…LYAA, and VMEM…IVLM. An ABC transmembrane type-1 domain is found at 30–312; that stretch reads VVASITLILN…LTNVSAQFQR (283 aa). One can recognise an ABC transporter domain in the interval 344–580; the sequence is IIFDDVTFFY…QGIYAQLYKL (237 aa). 378–385 contacts ATP; the sequence is GRSGSGKS.

It belongs to the ABC transporter superfamily. Lipid exporter (TC 3.A.1.106) family. In terms of assembly, homodimer.

It is found in the cell inner membrane. The enzyme catalyses ATP + H2O + lipid A-core oligosaccharideSide 1 = ADP + phosphate + lipid A-core oligosaccharideSide 2.. Its function is as follows. Involved in lipopolysaccharide (LPS) biosynthesis. Translocates lipid A-core from the inner to the outer leaflet of the inner membrane. Transmembrane domains (TMD) form a pore in the inner membrane and the ATP-binding domain (NBD) is responsible for energy generation. This Blochmanniella pennsylvanica (strain BPEN) protein is ATP-dependent lipid A-core flippase.